The primary structure comprises 207 residues: NADH-quinone oxidoreductase subunit C (207 aa).

The protein belongs to the complex I 30 kDa subunit family. NDH-1 is composed of 14 different subunits. Subunits NuoB, C, D, E, F, and G constitute the peripheral sector of the complex.

It is found in the cell inner membrane. It carries out the reaction a quinone + NADH + 5 H(+)(in) = a quinol + NAD(+) + 4 H(+)(out). NDH-1 shuttles electrons from NADH, via FMN and iron-sulfur (Fe-S) centers, to quinones in the respiratory chain. The immediate electron acceptor for the enzyme in this species is believed to be ubiquinone. Couples the redox reaction to proton translocation (for every two electrons transferred, four hydrogen ions are translocated across the cytoplasmic membrane), and thus conserves the redox energy in a proton gradient. The chain is NADH-quinone oxidoreductase subunit C from Bordetella pertussis (strain Tohama I / ATCC BAA-589 / NCTC 13251).